A 436-amino-acid polypeptide reads, in one-letter code: Serine hydroxymethyltransferase (436 aa).

(6S)-5,6,7,8-tetrahydrofolate contacts are provided by residues leucine 133 and 137-139; that span reads GHL. At lysine 242 the chain carries N6-(pyridoxal phosphate)lysine. 366-368 provides a ligand contact to (6S)-5,6,7,8-tetrahydrofolate; that stretch reads SPF.

This sequence belongs to the SHMT family. Homodimer. Requires pyridoxal 5'-phosphate as cofactor.

The protein resides in the cytoplasm. It carries out the reaction (6R)-5,10-methylene-5,6,7,8-tetrahydrofolate + glycine + H2O = (6S)-5,6,7,8-tetrahydrofolate + L-serine. Its pathway is one-carbon metabolism; tetrahydrofolate interconversion. It functions in the pathway amino-acid biosynthesis; glycine biosynthesis; glycine from L-serine: step 1/1. Functionally, catalyzes the reversible interconversion of serine and glycine with tetrahydrofolate (THF) serving as the one-carbon carrier. This reaction serves as the major source of one-carbon groups required for the biosynthesis of purines, thymidylate, methionine, and other important biomolecules. Also exhibits THF-independent aldolase activity toward beta-hydroxyamino acids, producing glycine and aldehydes, via a retro-aldol mechanism. This chain is Serine hydroxymethyltransferase, found in Novosphingobium aromaticivorans (strain ATCC 700278 / DSM 12444 / CCUG 56034 / CIP 105152 / NBRC 16084 / F199).